The primary structure comprises 467 residues: ATP synthase subunit beta (467 aa).

157-164 (GGAGVGKT) lines the ATP pocket.

The protein belongs to the ATPase alpha/beta chains family. In terms of assembly, F-type ATPases have 2 components, CF(1) - the catalytic core - and CF(0) - the membrane proton channel. CF(1) has five subunits: alpha(3), beta(3), gamma(1), delta(1), epsilon(1). CF(0) has three main subunits: a(1), b(2) and c(9-12). The alpha and beta chains form an alternating ring which encloses part of the gamma chain. CF(1) is attached to CF(0) by a central stalk formed by the gamma and epsilon chains, while a peripheral stalk is formed by the delta and b chains.

The protein resides in the cell inner membrane. It catalyses the reaction ATP + H2O + 4 H(+)(in) = ADP + phosphate + 5 H(+)(out). Functionally, produces ATP from ADP in the presence of a proton gradient across the membrane. The catalytic sites are hosted primarily by the beta subunits. This Desulfosudis oleivorans (strain DSM 6200 / JCM 39069 / Hxd3) (Desulfococcus oleovorans) protein is ATP synthase subunit beta.